A 376-amino-acid chain; its full sequence is Putative type I restriction enzyme MpnIIP endonuclease subunit N-terminal part (376 aa).

Functionally, the N-terminal section of a putative type I restriction enzyme that if reconstituted might recognize 5'-GAN(7)TAY-3' and cleave a random distance away. Subunit R is required for both nuclease and ATPase activities, but not for modification. The protein is Putative type I restriction enzyme MpnIIP endonuclease subunit N-terminal part of Mycoplasma pneumoniae (strain ATCC 29342 / M129 / Subtype 1) (Mycoplasmoides pneumoniae).